The following is a 159-amino-acid chain: Transcriptional repressor NrdR (159 aa).

The segment at 3–34 (CPKCGYNKSSVVDSRQAEEGTTIRRRRECEKC) is a zinc-finger region. Residues 49-139 (LLVIKKDGTR…VYKSFKDVDE (91 aa)) form the ATP-cone domain.

It belongs to the NrdR family. Zn(2+) serves as cofactor.

In terms of biological role, negatively regulates transcription of bacterial ribonucleotide reductase nrd genes and operons by binding to NrdR-boxes. The polypeptide is Transcriptional repressor NrdR (Streptococcus agalactiae serotype Ia (strain ATCC 27591 / A909 / CDC SS700)).